Reading from the N-terminus, the 410-residue chain is LL-diaminopimelate aminotransferase (410 aa).

Positions 15 and 42 each coordinate substrate. Residues Tyr72, 108-109, Tyr132, Asn188, Tyr219, and 247-249 contribute to the pyridoxal 5'-phosphate site; these read AK and SFS. The substrate site is built by Lys109, Tyr132, and Asn188. Lys250 is modified (N6-(pyridoxal phosphate)lysine). Positions 258 and 293 each coordinate pyridoxal 5'-phosphate. The substrate site is built by Asn293 and Arg389.

This sequence belongs to the class-I pyridoxal-phosphate-dependent aminotransferase family. LL-diaminopimelate aminotransferase subfamily. In terms of assembly, homodimer. The cofactor is pyridoxal 5'-phosphate.

The enzyme catalyses (2S,6S)-2,6-diaminopimelate + 2-oxoglutarate = (S)-2,3,4,5-tetrahydrodipicolinate + L-glutamate + H2O + H(+). It participates in amino-acid biosynthesis; L-lysine biosynthesis via DAP pathway; LL-2,6-diaminopimelate from (S)-tetrahydrodipicolinate (aminotransferase route): step 1/1. In terms of biological role, involved in the synthesis of meso-diaminopimelate (m-DAP or DL-DAP), required for both lysine and peptidoglycan biosynthesis. Catalyzes the direct conversion of tetrahydrodipicolinate to LL-diaminopimelate. Can also use m-DAP instead of LL-DAP as the amino-group donor. The polypeptide is LL-diaminopimelate aminotransferase (Bacteroides fragilis (strain ATCC 25285 / DSM 2151 / CCUG 4856 / JCM 11019 / LMG 10263 / NCTC 9343 / Onslow / VPI 2553 / EN-2)).